The primary structure comprises 323 residues: Methionyl-tRNA formyltransferase (323 aa).

113–116 (SLLP) provides a ligand contact to (6S)-5,6,7,8-tetrahydrofolate.

This sequence belongs to the Fmt family.

It catalyses the reaction L-methionyl-tRNA(fMet) + (6R)-10-formyltetrahydrofolate = N-formyl-L-methionyl-tRNA(fMet) + (6S)-5,6,7,8-tetrahydrofolate + H(+). Functionally, attaches a formyl group to the free amino group of methionyl-tRNA(fMet). The formyl group appears to play a dual role in the initiator identity of N-formylmethionyl-tRNA by promoting its recognition by IF2 and preventing the misappropriation of this tRNA by the elongation apparatus. The protein is Methionyl-tRNA formyltransferase of Porphyromonas gingivalis (strain ATCC 33277 / DSM 20709 / CIP 103683 / JCM 12257 / NCTC 11834 / 2561).